The following is a 130-amino-acid chain: Type VII secretion system extracellular protein C (130 aa).

Belongs to the EsxC family. In terms of assembly, forms both homodimers and heterodimers with EsxA. Homodimerization is calcium-dependent.

It is found in the secreted. In terms of biological role, implements its pathogenic function during infection. This chain is Type VII secretion system extracellular protein C, found in Staphylococcus aureus (strain Mu50 / ATCC 700699).